A 434-amino-acid polypeptide reads, in one-letter code: Glutamate-1-semialdehyde 2,1-aminomutase 1 (434 aa).

An N6-(pyridoxal phosphate)lysine modification is found at Lys-270.

It belongs to the class-III pyridoxal-phosphate-dependent aminotransferase family. HemL subfamily. As to quaternary structure, homodimer. It depends on pyridoxal 5'-phosphate as a cofactor.

Its subcellular location is the cytoplasm. It catalyses the reaction (S)-4-amino-5-oxopentanoate = 5-aminolevulinate. The protein operates within porphyrin-containing compound metabolism; protoporphyrin-IX biosynthesis; 5-aminolevulinate from L-glutamyl-tRNA(Glu): step 2/2. This is Glutamate-1-semialdehyde 2,1-aminomutase 1 from Bacillus anthracis (strain CDC 684 / NRRL 3495).